Reading from the N-terminus, the 100-residue chain is MSKIWKFTSFATISSVAAASLYLYAIDKNGYYYEKSKFKQVTDRVRKLIDGDETFKYVTIDDFVSGPTQIQTRSRGETFKDLWNAEVRRTAQWIYSLGGR.

The chain crosses the membrane as a helical span at residues 10–26 (FATISSVAAASLYLYAI).

This sequence belongs to the MICOS complex subunit Mic12 family. As to quaternary structure, component of the mitochondrial contact site and cristae organizing system (MICOS) complex.

It localises to the mitochondrion inner membrane. Component of the MICOS complex, a large protein complex of the mitochondrial inner membrane that plays crucial roles in the maintenance of crista junctions, inner membrane architecture, and formation of contact sites to the outer membrane. This is MICOS complex subunit MIC12 (AIM5) from Vanderwaltozyma polyspora (strain ATCC 22028 / DSM 70294 / BCRC 21397 / CBS 2163 / NBRC 10782 / NRRL Y-8283 / UCD 57-17) (Kluyveromyces polysporus).